The chain runs to 94 residues: Parvalbumin beta 4 (94 aa).

Residue Ala-1 is modified to N-acetylalanine. EF-hand domains follow at residues 36–63 (FFAI…FSAG) and 67–94 (LSDA…EFAA). Ca(2+) is bound by residues Asp-41, Asp-43, Ser-45, Phe-47, Glu-49, Glu-52, Asp-80, Asp-82, Asp-84, Met-86, and Glu-91.

This sequence belongs to the parvalbumin family.

In terms of biological role, in muscle, parvalbumin is thought to be involved in relaxation after contraction. It binds two calcium ions. This chain is Parvalbumin beta 4, found in Merluccius bilinearis (Silver hake).